The chain runs to 591 residues: L-fucose isomerase (591 aa).

Catalysis depends on proton acceptor residues Glu337 and Asp361. Mn(2+) is bound by residues Glu337, Asp361, and His528.

It belongs to the L-fucose isomerase family. As to quaternary structure, homohexamer. Mn(2+) is required as a cofactor.

Its subcellular location is the cytoplasm. It catalyses the reaction L-fucose = L-fuculose. Its pathway is carbohydrate degradation; L-fucose degradation; L-lactaldehyde and glycerone phosphate from L-fucose: step 1/3. Its function is as follows. Converts the aldose L-fucose into the corresponding ketose L-fuculose. This is L-fucose isomerase from Escherichia coli O17:K52:H18 (strain UMN026 / ExPEC).